We begin with the raw amino-acid sequence, 469 residues long: ATP synthase subunit beta (469 aa).

153–160 (GGAGVGKT) provides a ligand contact to ATP.

This sequence belongs to the ATPase alpha/beta chains family. In terms of assembly, F-type ATPases have 2 components, CF(1) - the catalytic core - and CF(0) - the membrane proton channel. CF(1) has five subunits: alpha(3), beta(3), gamma(1), delta(1), epsilon(1). CF(0) has three main subunits: a(1), b(2) and c(9-12). The alpha and beta chains form an alternating ring which encloses part of the gamma chain. CF(1) is attached to CF(0) by a central stalk formed by the gamma and epsilon chains, while a peripheral stalk is formed by the delta and b chains.

The protein localises to the cell membrane. The enzyme catalyses ATP + H2O + 4 H(+)(in) = ADP + phosphate + 5 H(+)(out). Its function is as follows. Produces ATP from ADP in the presence of a proton gradient across the membrane. The catalytic sites are hosted primarily by the beta subunits. This is ATP synthase subunit beta from Pediococcus pentosaceus (strain ATCC 25745 / CCUG 21536 / LMG 10740 / 183-1w).